Consider the following 250-residue polypeptide: Tumor necrosis factor ligand superfamily member 13 (250 aa).

A propeptide spanning residues 1–104 (MPASSPFLLA…ENGERSRKRR (104 aa)) is cleaved from the precursor. Disordered stretches follow at residues 61–82 (EVSR…PWQS) and 89–108 (DALE…AVLT). The THD domain occupies 116–250 (SVLHLVPINA…HGTFLGFVKL (135 aa)). Asn-124 is a glycosylation site (N-linked (GlcNAc...) asparagine). An intrachain disulfide couples Cys-196 to Cys-211.

Belongs to the tumor necrosis factor family. Homotrimer. The precursor is cleaved by furin. Expressed at high levels in transformed cell lines, cancers of colon, thyroid, lymphoid tissues and specifically expressed in monocytes and macrophages.

The protein resides in the secreted. Cytokine that binds to TNFRSF13B/TACI and to TNFRSF17/BCMA. Plays a role in the regulation of tumor cell growth. May be involved in monocyte/macrophage-mediated immunological processes. In Homo sapiens (Human), this protein is Tumor necrosis factor ligand superfamily member 13 (TNFSF13).